The primary structure comprises 204 residues: Proteasome subunit beta type-2-A (204 aa).

Met-1 is modified (N-acetylmethionine).

It belongs to the peptidase T1B family. In terms of assembly, component of the 20S core complex of the 26S proteasome. The 26S proteasome is composed of a core protease (CP), known as the 20S proteasome, capped at one or both ends by the 19S regulatory particle (RP/PA700). The 20S proteasome core is composed of 28 subunits that are arranged in four stacked rings, resulting in a barrel-shaped structure. The two end rings are each formed by seven alpha subunits, and the two central rings are each formed by seven beta subunits. The catalytic chamber with the active sites is on the inside of the barrel.

It localises to the cytoplasm. Its subcellular location is the nucleus. Functionally, non-catalytic component of the proteasome, a multicatalytic proteinase complex which is characterized by its ability to cleave peptides with Arg, Phe, Tyr, Leu, and Glu adjacent to the leaving group at neutral or slightly basic pH. The proteasome has an ATP-dependent proteolytic activity. This chain is Proteasome subunit beta type-2-A (PBD1), found in Arabidopsis thaliana (Mouse-ear cress).